Consider the following 192-residue polypeptide: MFKFDNLILASSSKQRLCLLNQLGVLPGEIVIPNIDESPLKKELPKIYSMRVAKEKVIKVSLLYPKKFILGADTVVCCGRKILPKAETEDQAFEILELISGRRHRVYTSVYLYAPSKKLHYRSVMTVVKIKRLSVKEINSYILSGEWKGKAGACNIQGNAGKFVISINGSYSSVIGLPLYETYSILSQYFPI.

D73 functions as the Proton acceptor in the catalytic mechanism.

Belongs to the Maf family. A divalent metal cation serves as cofactor.

It is found in the cytoplasm. It carries out the reaction a ribonucleoside 5'-triphosphate + H2O = a ribonucleoside 5'-phosphate + diphosphate + H(+). The enzyme catalyses a 2'-deoxyribonucleoside 5'-triphosphate + H2O = a 2'-deoxyribonucleoside 5'-phosphate + diphosphate + H(+). Nucleoside triphosphate pyrophosphatase. May have a dual role in cell division arrest and in preventing the incorporation of modified nucleotides into cellular nucleic acids. The sequence is that of Nucleoside triphosphate pyrophosphatase from Ehrlichia ruminantium (strain Welgevonden).